Consider the following 289-residue polypeptide: SAGA-associated factor 29kDa (289 aa).

Residues 9 to 36 are a coiled coil; it reads AQQIQDRLKDIQQNIHNVDEERRRAENS. The SGF29 C-terminal domain occupies 137–278; sequence GNYVAKVGDN…VIAYRPTKKG (142 aa). 2 histone H3K4me3 N-terminus binding regions span residues 179 to 181 and 225 to 228; these read DID and QTTC. Residues 249–251 form a histone H3K4me3 binding region; the sequence is FED.

This sequence belongs to the SGF29 family. Component of the Spt-Ada-Gcn5 acetyltransferase (SAGA) complex consisting of wda/Taf5L, Saf6, Taf9, Taf10b, Taf12, Ada1, Spt3, Spt7, Spt20, Sf3b3, Sf3b5, Nipped-A/Tra1, a histone acetyltransferase (HAT) module made up of Gcn5, Ada2b (Isoform B), Ada3 and Sgf29, and a deubiquitinase (DUB) module made up of not/nonstop, Sgf11, Atxn7 and e(y)2. Component of the Chiffon histone acetyltransferase (CHAT) complex consisting of Ada3, Sgf29, Gcn5, chif/chiffon and Ada2b (Isoform A).

It localises to the nucleus. In terms of biological role, component of both the SAGA and CHAT histone acetyltransferase complexes, which both predominantly acetylate histone H3. This is SAGA-associated factor 29kDa from Drosophila melanogaster (Fruit fly).